Here is an 85-residue protein sequence, read N- to C-terminus: Omega-conotoxin-like Am6.5 (85 aa).

A signal peptide spans 1–19 (MCILIVAVLFLTAWTFVMA). A propeptide spanning residues 20 to 53 (DDPRDEPDTVVRGGKLFSRARDEMNPAASKLNER) is cleaved from the precursor. Intrachain disulfides connect C55–C73, C62–C77, and C72–C81. A Glutamine amide modification is found at Q84.

It belongs to the conotoxin O1 family. Is not hydroxylated. Expressed by the venom duct.

It is found in the secreted. Its function is as follows. Omega-conotoxins act at presynaptic membranes, they bind and block voltage-gated calcium channels (Cav). In Conus amadis (Amadis cone), this protein is Omega-conotoxin-like Am6.5.